The following is an 833-amino-acid chain: Glycerol-3-phosphate acyltransferase (833 aa).

Residues 309–314 carry the HXXXXD motif motif; that stretch reads CHRSHI.

This sequence belongs to the GPAT/DAPAT family.

The protein localises to the cell inner membrane. It catalyses the reaction sn-glycerol 3-phosphate + an acyl-CoA = a 1-acyl-sn-glycero-3-phosphate + CoA. It participates in phospholipid metabolism; CDP-diacylglycerol biosynthesis; CDP-diacylglycerol from sn-glycerol 3-phosphate: step 1/3. The chain is Glycerol-3-phosphate acyltransferase from Pseudomonas savastanoi pv. phaseolicola (strain 1448A / Race 6) (Pseudomonas syringae pv. phaseolicola (strain 1448A / Race 6)).